Here is a 323-residue protein sequence, read N- to C-terminus: uncharacterized protein (323 aa).

A run of 3 helical transmembrane segments spans residues 8-28, 32-52, and 92-112; these read FLVI…MFME, LTLL…PFSL, and ITIF…CGIF.

The protein localises to the mitochondrion membrane. This is an uncharacterized protein from Neurospora crassa (strain ATCC 24698 / 74-OR23-1A / CBS 708.71 / DSM 1257 / FGSC 987).